The chain runs to 99 residues: Nucleoid-associated protein SEQ_0368 (99 aa).

Belongs to the YbaB/EbfC family. As to quaternary structure, homodimer.

Its subcellular location is the cytoplasm. It is found in the nucleoid. Functionally, binds to DNA and alters its conformation. May be involved in regulation of gene expression, nucleoid organization and DNA protection. This Streptococcus equi subsp. equi (strain 4047) protein is Nucleoid-associated protein SEQ_0368.